A 345-amino-acid polypeptide reads, in one-letter code: RING finger protein 228 (345 aa).

The segment covering M1 to S21 has biased composition (low complexity). The disordered stretch occupies residues M1–A43. The segment at C58–R125 adopts an RING-type zinc-finger fold. Residues L159–G213 form a disordered region. A compositionally biased stretch (pro residues) spans R163 to A201. A compositionally biased stretch (low complexity) spans E202 to G213. 2 helical membrane passes run V236–V256 and L290–L310. The disordered stretch occupies residues A319–T345. Gly residues predominate over residues S321–P331. Over residues R332–T345 the composition is skewed to low complexity.

It is found in the membrane. This chain is RING finger protein 228, found in Homo sapiens (Human).